The following is a 1141-amino-acid chain: DNA polymerase II large subunit (1141 aa).

The interval 567 to 587 is disordered; it reads AGTRVGGRMGRPGKSAPRKMK.

The protein belongs to the archaeal DNA polymerase II family. As to quaternary structure, heterodimer of a large subunit and a small subunit.

It catalyses the reaction DNA(n) + a 2'-deoxyribonucleoside 5'-triphosphate = DNA(n+1) + diphosphate. It carries out the reaction Exonucleolytic cleavage in the 3'- to 5'-direction to yield nucleoside 5'-phosphates.. Possesses two activities: a DNA synthesis (polymerase) and an exonucleolytic activity that degrades single-stranded DNA in the 3'- to 5'-direction. Has a template-primer preference which is characteristic of a replicative DNA polymerase. The protein is DNA polymerase II large subunit of Methanocorpusculum labreanum (strain ATCC 43576 / DSM 4855 / Z).